Consider the following 197-residue polypeptide: Phospholipid hydroperoxide glutathione peroxidase (197 aa).

S40 carries the post-translational modification Phosphoserine. U73 is an active-site residue. A non-standard amino acid (selenocysteine) is located at residue U73.

It belongs to the glutathione peroxidase family. In terms of assembly, monomer. Has a tendency to form higher mass oligomers. Interacts with FUNDC1; this interaction promotes GPX4 recruitment into mitochondria through TOM/TIM complex where it is degraded by mitophagy.

Its subcellular location is the mitochondrion. The protein resides in the cytoplasm. It carries out the reaction a hydroperoxy polyunsaturated fatty acid + 2 glutathione = a hydroxy polyunsaturated fatty acid + glutathione disulfide + H2O. The enzyme catalyses (12S)-hydroperoxy-(5Z,8Z,10E,14Z)-eicosatetraenoate + 2 glutathione = (12S)-hydroxy-(5Z,8Z,10E,14Z)-eicosatetraenoate + glutathione disulfide + H2O. It catalyses the reaction (13S)-hydroperoxy-(9Z,11E)-octadecadienoate + 2 glutathione = (13S)-hydroxy-(9Z,11E)-octadecadienoate + glutathione disulfide + H2O. Essential antioxidant peroxidase that directly reduces phospholipid hydroperoxide even if they are incorporated in membranes and lipoproteins. Can also reduce fatty acid hydroperoxide, cholesterol hydroperoxide and thymine hydroperoxide. Plays a key role in protecting cells from oxidative damage by preventing membrane lipid peroxidation. Required to prevent cells from ferroptosis, a non-apoptotic cell death resulting from an iron-dependent accumulation of lipid reactive oxygen species. The presence of selenocysteine (Sec) versus Cys at the active site is essential for life: it provides resistance to overoxidation and prevents cells against ferroptosis. The presence of Sec at the active site is also essential for the survival of a specific type of parvalbumin-positive interneurons, thereby preventing against fatal epileptic seizures. May be required to protect cells from the toxicity of ingested lipid hydroperoxides. Required for normal sperm development and male fertility. Essential for maturation and survival of photoreceptor cells. Plays a role in a primary T-cell response to viral and parasitic infection by protecting T-cells from ferroptosis and by supporting T-cell expansion. Plays a role of glutathione peroxidase in platelets in the arachidonic acid metabolism. Reduces hydroperoxy ester lipids formed by a 15-lipoxygenase that may play a role as down-regulator of the cellular 15-lipoxygenase pathway. This is Phospholipid hydroperoxide glutathione peroxidase from Sapajus apella (Brown-capped capuchin).